The primary structure comprises 356 residues: 5-formaminoimidazole-4-carboxamide-1-(beta)-D-ribofuranosyl 5'-monophosphate synthetase 1 (356 aa).

His-27 and Ser-94 together coordinate 5-amino-1-(5-phospho-beta-D-ribosyl)imidazole-4-carboxamide. The ATP-grasp domain maps to 101-333 (TENFAEMAVP…YADLIQEDLS (233 aa)). ATP is bound by residues 145–196 (PRDI…TRYY) and Glu-226. Position 255 (Asn-255) interacts with 5-amino-1-(5-phospho-beta-D-ribosyl)imidazole-4-carboxamide. Residues Glu-293 and Glu-306 each coordinate Mg(2+).

Belongs to the phosphohexose mutase family. Requires Mg(2+) as cofactor. It depends on Mn(2+) as a cofactor.

The catalysed reaction is 5-amino-1-(5-phospho-beta-D-ribosyl)imidazole-4-carboxamide + formate + ATP = 5-formamido-1-(5-phospho-D-ribosyl)imidazole-4-carboxamide + ADP + phosphate. Its pathway is purine metabolism; IMP biosynthesis via de novo pathway; 5-formamido-1-(5-phospho-D-ribosyl)imidazole-4-carboxamide from 5-amino-1-(5-phospho-D-ribosyl)imidazole-4-carboxamide (formate route): step 1/1. Catalyzes the ATP- and formate-dependent formylation of 5-aminoimidazole-4-carboxamide-1-beta-d-ribofuranosyl 5'-monophosphate (AICAR) to 5-formaminoimidazole-4-carboxamide-1-beta-d-ribofuranosyl 5'-monophosphate (FAICAR) in the absence of folates. This is 5-formaminoimidazole-4-carboxamide-1-(beta)-D-ribofuranosyl 5'-monophosphate synthetase 1 from Methanosarcina mazei (strain ATCC BAA-159 / DSM 3647 / Goe1 / Go1 / JCM 11833 / OCM 88) (Methanosarcina frisia).